A 135-amino-acid chain; its full sequence is Cytochrome c-type biogenesis protein CcmE (135 aa).

The Cytoplasmic portion of the chain corresponds to Met-1 to Arg-8. The chain crosses the membrane as a helical; Signal-anchor for type II membrane protein span at residues Phe-9–Asn-29. At Leu-30–Glu-135 the chain is on the periplasmic side. His-118 and Tyr-122 together coordinate heme.

It belongs to the CcmE/CycJ family.

The protein localises to the cell inner membrane. Heme chaperone required for the biogenesis of c-type cytochromes. Transiently binds heme delivered by CcmC and transfers the heme to apo-cytochromes in a process facilitated by CcmF and CcmH. The protein is Cytochrome c-type biogenesis protein CcmE of Neorickettsia sennetsu (strain ATCC VR-367 / Miyayama) (Ehrlichia sennetsu).